The primary structure comprises 364 residues: DNA replication and repair protein RecF (364 aa).

Residue 30-37 coordinates ATP; sequence GNNAQGKT.

Belongs to the RecF family.

It localises to the cytoplasm. Functionally, the RecF protein is involved in DNA metabolism; it is required for DNA replication and normal SOS inducibility. RecF binds preferentially to single-stranded, linear DNA. It also seems to bind ATP. In Streptococcus uberis (strain ATCC BAA-854 / 0140J), this protein is DNA replication and repair protein RecF.